A 101-amino-acid chain; its full sequence is Small ribosomal subunit protein uS14 (101 aa).

Belongs to the universal ribosomal protein uS14 family. In terms of assembly, part of the 30S ribosomal subunit. Contacts proteins S3 and S10.

Binds 16S rRNA, required for the assembly of 30S particles and may also be responsible for determining the conformation of the 16S rRNA at the A site. The chain is Small ribosomal subunit protein uS14 from Saccharophagus degradans (strain 2-40 / ATCC 43961 / DSM 17024).